A 155-amino-acid polypeptide reads, in one-letter code: Aspartate carbamoyltransferase regulatory chain (155 aa).

Residues cysteine 113, cysteine 118, cysteine 139, and cysteine 142 each coordinate Zn(2+).

Belongs to the PyrI family. In terms of assembly, contains catalytic and regulatory chains. It depends on Zn(2+) as a cofactor.

Involved in allosteric regulation of aspartate carbamoyltransferase. This chain is Aspartate carbamoyltransferase regulatory chain, found in Methanoculleus marisnigri (strain ATCC 35101 / DSM 1498 / JR1).